We begin with the raw amino-acid sequence, 253 residues long: Ribosome-inactivating protein saporin-7 (253 aa).

Glutamate 176 is an active-site residue.

This sequence belongs to the ribosome-inactivating protein family. Type 1 RIP subfamily.

The catalysed reaction is Endohydrolysis of the N-glycosidic bond at one specific adenosine on the 28S rRNA.. Its function is as follows. Ribosome-inactivating protein of type 1, inhibits protein synthesis in animal cells. The sequence is that of Ribosome-inactivating protein saporin-7 (SAP7) from Saponaria officinalis (Common soapwort).